The sequence spans 436 residues: UDP-N-acetylmuramate--L-alanine ligase (436 aa).

110 to 116 (GAHGKTS) provides a ligand contact to ATP.

It belongs to the MurCDEF family.

The protein localises to the cytoplasm. It carries out the reaction UDP-N-acetyl-alpha-D-muramate + L-alanine + ATP = UDP-N-acetyl-alpha-D-muramoyl-L-alanine + ADP + phosphate + H(+). It participates in cell wall biogenesis; peptidoglycan biosynthesis. Functionally, cell wall formation. The polypeptide is UDP-N-acetylmuramate--L-alanine ligase (Lacticaseibacillus paracasei (strain ATCC 334 / BCRC 17002 / CCUG 31169 / CIP 107868 / KCTC 3260 / NRRL B-441) (Lactobacillus paracasei)).